The chain runs to 381 residues: O-phospho-L-seryl-tRNA:Cys-tRNA synthase (381 aa).

Pyridoxal 5'-phosphate-binding positions include 86 to 87 (AR), Asn192, and 215 to 217 (SGH). At Lys218 the chain carries N6-(pyridoxal phosphate)lysine.

The protein belongs to the SepCysS family. Homodimer. Interacts with SepRS. It depends on pyridoxal 5'-phosphate as a cofactor.

The enzyme catalyses O-phospho-L-seryl-tRNA(Cys) + hydrogen sulfide + H(+) = L-cysteinyl-tRNA(Cys) + phosphate. Converts O-phospho-L-seryl-tRNA(Cys) (Sep-tRNA(Cys)) to L-cysteinyl-tRNA(Cys) (Cys-tRNA(Cys)). The protein is O-phospho-L-seryl-tRNA:Cys-tRNA synthase of Methanococcus vannielii (strain ATCC 35089 / DSM 1224 / JCM 13029 / OCM 148 / SB).